The sequence spans 262 residues: Pyridoxine 5'-phosphate synthase (262 aa).

N6 contributes to the 3-amino-2-oxopropyl phosphate binding site. 8–9 (DH) contributes to the 1-deoxy-D-xylulose 5-phosphate binding site. Position 17 (R17) interacts with 3-amino-2-oxopropyl phosphate. H43 acts as the Proton acceptor in catalysis. Positions 45 and 50 each coordinate 1-deoxy-D-xylulose 5-phosphate. The active-site Proton acceptor is the E70. Position 102 (T102) interacts with 1-deoxy-D-xylulose 5-phosphate. The active-site Proton donor is the H215. Residues G216 and 237–238 (GH) contribute to the 3-amino-2-oxopropyl phosphate site.

This sequence belongs to the PNP synthase family. Homooctamer; tetramer of dimers.

The protein resides in the cytoplasm. The catalysed reaction is 3-amino-2-oxopropyl phosphate + 1-deoxy-D-xylulose 5-phosphate = pyridoxine 5'-phosphate + phosphate + 2 H2O + H(+). It functions in the pathway cofactor biosynthesis; pyridoxine 5'-phosphate biosynthesis; pyridoxine 5'-phosphate from D-erythrose 4-phosphate: step 5/5. Its function is as follows. Catalyzes the complicated ring closure reaction between the two acyclic compounds 1-deoxy-D-xylulose-5-phosphate (DXP) and 3-amino-2-oxopropyl phosphate (1-amino-acetone-3-phosphate or AAP) to form pyridoxine 5'-phosphate (PNP) and inorganic phosphate. The protein is Pyridoxine 5'-phosphate synthase of Helicobacter pylori (strain J99 / ATCC 700824) (Campylobacter pylori J99).